We begin with the raw amino-acid sequence, 691 residues long: Pentatricopeptide repeat-containing protein At5g27110 (691 aa).

PPR repeat units lie at residues 38–68 (DVVL…FDIR), 70–104 (DVYI…SICV), 106–140 (DSFT…GYVC), 141–171 (DVVV…MPER), 172–206 (DVAS…GFEP), 207–241 (NSVS…GFEL), 242–272 (DEYV…MPRK), 273–307 (SLVA…GTRP), 308–342 (SQTT…VVNA), 343–373 (DIYV…TQKD), 374–408 (VAES…GVKP), 409–443 (DVVT…RLET), 444–474 (DELL…IPKK), 475–509 (DVVS…GLKP), 510–540 (DGVT…MRSK), and 546–576 (IIEH…TPET). A type E motif region spans residues 582–657 (LLSTLFSACC…KPGCSWIEMS (76 aa)). The segment at 658–688 (DKVCHFFAEDRSHLRAENVYECLALLSGHME) is type E(+) motif.

Belongs to the PPR family. PCMP-E subfamily.

The chain is Pentatricopeptide repeat-containing protein At5g27110 (PCMP-E14) from Arabidopsis thaliana (Mouse-ear cress).